Reading from the N-terminus, the 375-residue chain is Succinyl-diaminopimelate desuccinylase (375 aa).

A Zn(2+)-binding site is contributed by H66. D68 is an active-site residue. Residue D99 participates in Zn(2+) binding. E130 (proton acceptor) is an active-site residue. Zn(2+) contacts are provided by E131, E159, and H345.

Belongs to the peptidase M20A family. DapE subfamily. As to quaternary structure, homodimer. Zn(2+) is required as a cofactor. The cofactor is Co(2+).

The catalysed reaction is N-succinyl-(2S,6S)-2,6-diaminopimelate + H2O = (2S,6S)-2,6-diaminopimelate + succinate. Its pathway is amino-acid biosynthesis; L-lysine biosynthesis via DAP pathway; LL-2,6-diaminopimelate from (S)-tetrahydrodipicolinate (succinylase route): step 3/3. Functionally, catalyzes the hydrolysis of N-succinyl-L,L-diaminopimelic acid (SDAP), forming succinate and LL-2,6-diaminopimelate (DAP), an intermediate involved in the bacterial biosynthesis of lysine and meso-diaminopimelic acid, an essential component of bacterial cell walls. The chain is Succinyl-diaminopimelate desuccinylase from Xanthobacter autotrophicus (strain ATCC BAA-1158 / Py2).